The sequence spans 487 residues: Cysteine--tRNA ligase (487 aa).

Cys29 lines the Zn(2+) pocket. The short motif at 31-41 is the 'HIGH' region element; that stretch reads VTVYDVNHVGH. 3 residues coordinate Zn(2+): Cys209, His234, and Glu238. The 'KMSKS' region motif lies at 266–270; sequence KMSKS. Lys269 contributes to the ATP binding site.

The protein belongs to the class-I aminoacyl-tRNA synthetase family. In terms of assembly, monomer. The cofactor is Zn(2+).

It localises to the cytoplasm. It catalyses the reaction tRNA(Cys) + L-cysteine + ATP = L-cysteinyl-tRNA(Cys) + AMP + diphosphate. The chain is Cysteine--tRNA ligase from Persephonella marina (strain DSM 14350 / EX-H1).